The following is a 204-amino-acid chain: N-(5'-phosphoribosyl)anthranilate isomerase (204 aa).

The protein belongs to the TrpF family.

It catalyses the reaction N-(5-phospho-beta-D-ribosyl)anthranilate = 1-(2-carboxyphenylamino)-1-deoxy-D-ribulose 5-phosphate. It participates in amino-acid biosynthesis; L-tryptophan biosynthesis; L-tryptophan from chorismate: step 3/5. The protein is N-(5'-phosphoribosyl)anthranilate isomerase of Bacillus cereus (strain G9842).